Consider the following 464-residue polypeptide: D-inositol 3-phosphate glycosyltransferase (464 aa).

The segment covering 1–20 has biased composition (basic and acidic residues); that stretch reads MEGAPRRPDRHARSEEERHV. Positions 1–44 are disordered; that stretch reads MEGAPRRPDRHARSEEERHVSQYASRLGRRSPAAPTRRRMLRKP. Residue H53 coordinates 1D-myo-inositol 3-phosphate. UDP-N-acetyl-alpha-D-glucosamine contacts are provided by residues 59 to 60 and G67; that span reads QP. 1D-myo-inositol 3-phosphate contacts are provided by residues 64–69, K122, Y155, T179, and R199; that span reads DAGGMN. Positions 274, 279, and 340 each coordinate UDP-N-acetyl-alpha-D-glucosamine. Positions 349, 350, and 352 each coordinate Mg(2+). Residues E362 and E370 each coordinate UDP-N-acetyl-alpha-D-glucosamine. Position 376 (T376) interacts with Mg(2+).

Belongs to the glycosyltransferase group 1 family. MshA subfamily. Homodimer.

The enzyme catalyses 1D-myo-inositol 3-phosphate + UDP-N-acetyl-alpha-D-glucosamine = 1D-myo-inositol 2-acetamido-2-deoxy-alpha-D-glucopyranoside 3-phosphate + UDP + H(+). In terms of biological role, catalyzes the transfer of a N-acetyl-glucosamine moiety to 1D-myo-inositol 3-phosphate to produce 1D-myo-inositol 2-acetamido-2-deoxy-glucopyranoside 3-phosphate in the mycothiol biosynthesis pathway. This is D-inositol 3-phosphate glycosyltransferase from Streptomyces avermitilis (strain ATCC 31267 / DSM 46492 / JCM 5070 / NBRC 14893 / NCIMB 12804 / NRRL 8165 / MA-4680).